The primary structure comprises 215 residues: Cytidylate kinase (215 aa).

10-18 serves as a coordination point for ATP; it reads GPAASGKGT.

It belongs to the cytidylate kinase family. Type 1 subfamily.

Its subcellular location is the cytoplasm. It catalyses the reaction CMP + ATP = CDP + ADP. It carries out the reaction dCMP + ATP = dCDP + ADP. This Bartonella quintana (strain Toulouse) (Rochalimaea quintana) protein is Cytidylate kinase.